A 2988-amino-acid polypeptide reads, in one-letter code: NBPF family member NBPF14 (2988 aa).

Residues Arg75–Ala119 are a coiled coil. 3 disordered regions span residues Lys161–Pro200, Glu451–Ser474, and Trp520–Ser566. The span at Glu165–Glu177 shows a compositional bias: acidic residues. 32 consecutive Olduvai domains span residues Glu165–Pro259, Glu436–Pro528, Glu529–Gly600, Arg601–Pro692, Ser695–Asp750, Arg751–Lys843, Glu844–Asp919, Arg920–Lys1012, Glu1013–Pro1105, Ser1108–Asp1163, Arg1164–Lys1256, Glu1257–Pro1349, Ser1352–Asp1407, Arg1408–Lys1500, Glu1501–Pro1593, Ser1596–Asp1651, Arg1652–Lys1744, Glu1745–Pro1837, Ser1840–Asp1895, Arg1896–Lys1988, Glu1989–Pro2081, Ser2084–Asp2139, Arg2140–Lys2232, Glu2233–Pro2325, Ser2328–Asp2383, Arg2384–Lys2476, Glu2477–Pro2569, Ser2572–Asp2627, Arg2628–Lys2720, Glu2721–Pro2813, Ser2816–Lys2889, and Glu2890–Gln2988. Residues Glu190 to Pro200 show a composition bias toward basic and acidic residues. Composition is skewed to acidic residues over residues Asn530–Glu539 and Glu550–Asp562. Disordered regions lie at residues Lys754–Leu773, Glu828–Lys871, and Lys999–Asp1038. Composition is skewed to basic residues over residues Gly831 to Arg849 and Gly1000 to Arg1018. Residues Lys1243–Asp1282 form a disordered region. The span at Gly1244–Arg1262 shows a compositional bias: basic residues. Residues Lys1487–Ser1521 form a disordered region. Over residues Gly1488 to Arg1506 the composition is skewed to basic residues. The tract at residues Lys1731–Asp1770 is disordered. A compositionally biased stretch (basic residues) spans Gly1732 to Arg1750. The interval Lys1975–Asp2014 is disordered. A compositionally biased stretch (basic residues) spans Gly1976–Arg1994. The interval Lys2219–Asp2258 is disordered. Residues Gly2220–Arg2238 are compositionally biased toward basic residues. Positions Lys2463–Asp2502 are disordered. Residues Gly2464–Arg2482 are compositionally biased toward basic residues. 2 disordered regions span residues Lys2707–Leu2745 and Gly2877–Leu2909. Basic residues-rich tracts occupy residues Gly2708–Arg2726 and Gly2877–Arg2895.

This sequence belongs to the NBPF family. As to expression, expressed in spleen and fetal liver.

The protein localises to the cytoplasm. In Homo sapiens (Human), this protein is NBPF family member NBPF14.